We begin with the raw amino-acid sequence, 337 residues long: MPEVTVTEHLLLHQKKSPAATGQFTTLLNDLVLSAKIISRSVTKAGLLDVLGGTGEVNVQGELVQKLDEFANRVLIYRMERSGAVCAMASEENADIIKVPEKLHRGDYVLIFDPLDGSSNIDVNINVGTIFSILRRKSPASDDVCIDDVLQPGYEQVAAGYILYGPSTMLVFSTGQGVHGFTLDPSVGEFLLSHPDMSIPERGRIYSINESYWNYWDEPTREIVSYFKGDHNERGKPYSLRYVGSLVADFHRTLLYGGIFMYPMDYRHPDKPQGKLRLMCEASPLAFLAEQAGGRAIDGSRRILDVCPGTLHERIPLFIGSARDVDKVEEIYARHRA.

Positions 91, 113, 115, and 116 each coordinate Mg(2+). Substrate contacts are provided by residues Asp116–Ser119, Asn209, Tyr242, and Lys275. Glu281 contributes to the Mg(2+) binding site.

This sequence belongs to the FBPase class 1 family. As to quaternary structure, homotetramer. Mg(2+) is required as a cofactor.

The protein localises to the cytoplasm. It carries out the reaction beta-D-fructose 1,6-bisphosphate + H2O = beta-D-fructose 6-phosphate + phosphate. It participates in carbohydrate biosynthesis; gluconeogenesis. The protein is Fructose-1,6-bisphosphatase class 1 of Nitratidesulfovibrio vulgaris (strain DP4) (Desulfovibrio vulgaris).